Reading from the N-terminus, the 126-residue chain is Histone H2B type 1-K (126 aa).

Over residues 1–12 (MPEPAKSAPAPK) the composition is skewed to low complexity. The interval 1–36 (MPEPAKSAPAPKKGSKKAVTKAQKKDGKKRKRSRKE) is disordered. P2 carries the post-translational modification N-acetylproline. Residue E3 is modified to ADP-ribosyl glutamic acid. K6 carries the N6-(2-hydroxyisobutyryl)lysine; alternate modification. K6 carries the post-translational modification N6-(beta-hydroxybutyryl)lysine; alternate. K6 is subject to N6-acetyllysine; alternate. Position 6 is an N6-butyryllysine; alternate (K6). K6 is subject to N6-crotonyllysine; alternate. K6 carries the N6-lactoyllysine; alternate modification. A Glycyl lysine isopeptide (Lys-Gly) (interchain with G-Cter in SUMO2); alternate cross-link involves residue K6. An ADP-ribosylserine modification is found at S7. N6-(beta-hydroxybutyryl)lysine; alternate is present on K12. 2 positions are modified to N6-acetyllysine; alternate: K12 and K13. N6-crotonyllysine; alternate occurs at positions 12 and 13. An N6-lactoyllysine; alternate modification is found at K12. K13 bears the N6-(2-hydroxyisobutyryl)lysine; alternate mark. S15 bears the Phosphoserine; by STK4/MST1 mark. An N6-acetyllysine; alternate mark is found at K16, K17, K21, and K24. K16, K17, K21, and K24 each carry N6-crotonyllysine; alternate. N6-lactoyllysine; alternate is present on residues K16, K17, K21, and K24. K17 bears the N6-glutaryllysine; alternate mark. An N6-(2-hydroxyisobutyryl)lysine; alternate mark is found at K21 and K24. K21 carries the post-translational modification N6-(beta-hydroxybutyryl)lysine; alternate. An N6-butyryllysine; alternate modification is found at K21. K21 participates in a covalent cross-link: Glycyl lysine isopeptide (Lys-Gly) (interchain with G-Cter in SUMO2); alternate. The residue at position 25 (K25) is an N6-(2-hydroxyisobutyryl)lysine. N6-(2-hydroxyisobutyryl)lysine; alternate is present on K35. An N6-(beta-hydroxybutyryl)lysine; alternate modification is found at K35. Residue K35 is modified to N6-crotonyllysine; alternate. Residue K35 is modified to N6-glutaryllysine; alternate. K35 bears the N6-succinyllysine; alternate mark. Residue K35 forms a Glycyl lysine isopeptide (Lys-Gly) (interchain with G-Cter in ubiquitin); alternate linkage. At E36 the chain carries PolyADP-ribosyl glutamic acid. S37 carries the post-translational modification Phosphoserine; by AMPK. An N6-(2-hydroxyisobutyryl)lysine; alternate mark is found at K44, K47, and K58. K44 is modified (N6-lactoyllysine; alternate). N6-glutaryllysine; alternate is present on residues K44 and K47. K47 bears the N6-methyllysine; alternate mark. N6,N6-dimethyllysine; alternate is present on K58. Dimethylated arginine is present on R80. K86 is modified (N6-(2-hydroxyisobutyryl)lysine; alternate). At K86 the chain carries N6-acetyllysine; alternate. At K86 the chain carries N6-lactoyllysine; alternate. K86 carries the N6,N6,N6-trimethyllysine; alternate modification. Omega-N-methylarginine occurs at positions 87 and 93. K109 is subject to N6-(2-hydroxyisobutyryl)lysine; alternate. K109 is subject to N6-lactoyllysine; alternate. N6-glutaryllysine; alternate is present on K109. K109 is modified (N6-methyllysine; alternate). The O-linked (GlcNAc) serine glycan is linked to S113. T116 carries the post-translational modification Phosphothreonine. An N6-(2-hydroxyisobutyryl)lysine; alternate mark is found at K117 and K121. The residue at position 117 (K117) is an N6-(beta-hydroxybutyryl)lysine; alternate. Residues K117 and K121 each carry the N6-lactoyllysine; alternate modification. K117 and K121 each carry N6-glutaryllysine; alternate. 2 positions are modified to N6-succinyllysine; alternate: K117 and K121. Position 117 is an N6-methylated lysine; alternate (K117). K121 is covalently cross-linked (Glycyl lysine isopeptide (Lys-Gly) (interchain with G-Cter in ubiquitin); alternate).

It belongs to the histone H2B family. The nucleosome is a histone octamer containing two molecules each of H2A, H2B, H3 and H4 assembled in one H3-H4 heterotetramer and two H2A-H2B heterodimers. The octamer wraps approximately 147 bp of DNA. In terms of processing, monoubiquitination at Lys-35 (H2BK34Ub) by the MSL1/MSL2 dimer is required for histone H3 'Lys-4' (H3K4me) and 'Lys-79' (H3K79me) methylation and transcription activation at specific gene loci, such as HOXA9 and MEIS1 loci. Similarly, monoubiquitination at Lys-121 (H2BK120Ub) by the RNF20/40 complex gives a specific tag for epigenetic transcriptional activation and is also prerequisite for histone H3 'Lys-4' and 'Lys-79' methylation. It also functions cooperatively with the FACT dimer to stimulate elongation by RNA polymerase II. H2BK120Ub also acts as a regulator of mRNA splicing: deubiquitination by USP49 is required for efficient cotranscriptional splicing of a large set of exons. Phosphorylated on Ser-15 (H2BS14ph) by STK4/MST1 during apoptosis; which facilitates apoptotic chromatin condensation. Also phosphorylated on Ser-15 in response to DNA double strand breaks (DSBs), and in correlation with somatic hypermutation and immunoglobulin class-switch recombination. Phosphorylation at Ser-37 (H2BS36ph) by AMPK in response to stress promotes transcription. Post-translationally, glcNAcylation at Ser-113 promotes monoubiquitination of Lys-121. It fluctuates in response to extracellular glucose, and associates with transcribed genes. In terms of processing, ADP-ribosylated by PARP1 or PARP2 on Ser-7 (H2BS6ADPr) in response to DNA damage. H2BS6ADPr promotes recruitment of CHD1L. Mono-ADP-ribosylated on Glu-3 (H2BE2ADPr) by PARP3 in response to single-strand breaks. Poly ADP-ribosylation on Glu-36 (H2BE35ADPr) by PARP1 regulates adipogenesis: it inhibits phosphorylation at Ser-37 (H2BS36ph), thereby blocking expression of pro-adipogenetic genes. Crotonylation (Kcr) is specifically present in male germ cells and marks testis-specific genes in post-meiotic cells, including X-linked genes that escape sex chromosome inactivation in haploid cells. Crotonylation marks active promoters and enhancers and confers resistance to transcriptional repressors. It is also associated with post-meiotically activated genes on autosomes. Post-translationally, lactylated in macrophages by EP300/P300 by using lactoyl-CoA directly derived from endogenous or exogenous lactate, leading to stimulates gene transcription.

The protein localises to the nucleus. It localises to the chromosome. In terms of biological role, core component of nucleosome. Nucleosomes wrap and compact DNA into chromatin, limiting DNA accessibility to the cellular machineries which require DNA as a template. Histones thereby play a central role in transcription regulation, DNA repair, DNA replication and chromosomal stability. DNA accessibility is regulated via a complex set of post-translational modifications of histones, also called histone code, and nucleosome remodeling. The chain is Histone H2B type 1-K from Macaca fascicularis (Crab-eating macaque).